Consider the following 489-residue polypeptide: FAD-linked oxidoreductase tazG (489 aa).

An N-terminal signal peptide occupies residues 1 to 17 (MVAFSAILQTALGLSAA). N38 carries N-linked (GlcNAc...) asparagine glycosylation. The region spanning 55–224 (APSYGAGAIK…TSATYRLPEV (170 aa)) is the FAD-binding PCMH-type domain. Residues N242 and N306 are each glycosylated (N-linked (GlcNAc...) asparagine).

This sequence belongs to the oxygen-dependent FAD-linked oxidoreductase family. It depends on FAD as a cofactor.

It functions in the pathway secondary metabolite biosynthesis. Functionally, FAD-linked oxidoreductase; part of the gene cluster that mediates the biosynthesis of azaterrilone A and other azaphilones, a class of fungal metabolites characterized by a highly oxygenated pyrano-quinone bicyclic core and exhibiting a broad range of bioactivities. The first step of the pathway begins with the non-reducing polyketide synthase tazA that assembles one acetyl-CoA starter unit, five malonyl-CoA units, and catalyzes a series of Claisen condensations, methylation, PT-mediated cyclization, and finally releases the first hexaketide precursor through the R-domain. The tazA product then undergoes reduction on its terminal ketone and the following pyran-ring formation by yet undetermined enzyme(s). Dehydration and enoyl reduction, possibly involving the trans-enoyl reductase tazE leads to the next intermediate. TazD is predicted as an acetyltransferase and might catalyze the acetylation steps leading to the synthesis of azaterrilone A. Azaterrilone A is not the final product of the taz pathway and both the highly reducing polyketide synthase tazB and the dual enzyme tazHJ catalyze late steps of the pathway, leading to the production of the 2 final stereoisomers that contain additional polyketide modification whose structures have still to be determined. The protein is FAD-linked oxidoreductase tazG of Aspergillus terreus (strain NIH 2624 / FGSC A1156).